A 394-amino-acid polypeptide reads, in one-letter code: MEGISALEKNVAELTVMDVYDIASAVGQEFERVIDQYGCEVIGRLMPKVVRVLEILEVLVSRNHINPEMEELRLELDRLRLERMDRIEKEKKHLKELELVEDVWRGEAQDLLNQISQLQEENKQLLTNLSHKDVNLTEEEFQKHEGMSERERQVMKKLKEVVDKQRDEIRARDRELVLKNEDVEALQQQQSRLIKINHDLRHRVTVVEAQGKALIEQKVELEAYLQTKEQEAASMRIEIGKLRDKLKGEHHTNGEEIKTETLNEECIFETEKFSLDLKDSNRPRFTLQELRDVLHERNELKAKVFMLQEELAYYKSEEAEEENKLPQSLPVINSKAPIPQESGIKRLFSFFSRDKKRMPMMQKNVHFQESFGEWTNYNRDDVYTEQGQEALQHM.

Residues 2–89 (EGISALEKNV…RLERMDRIEK (88 aa)) enclose the RH1 domain. A coiled-coil region spans residues 68 to 327 (EMEELRLELD…EAEEENKLPQ (260 aa)). The RH2 domain occupies 282–347 (RPRFTLQELR…IPQESGIKRL (66 aa)).

This sequence belongs to the RILPL family.

It is found in the cytoplasm. The protein localises to the cytosol. The protein resides in the cytoskeleton. It localises to the microtubule organizing center. Its subcellular location is the centrosome. It is found in the cell projection. The protein localises to the cilium. Its function is as follows. Plays a role in the regulation of cell shape and polarity. Plays a role in cellular protein transport, including protein transport away from primary cilia. Neuroprotective protein. This Xenopus laevis (African clawed frog) protein is RILP-like protein 1 (rilpl1).